Consider the following 335-residue polypeptide: PA-phosphatase related-family protein DDB_G0275547 (335 aa).

Helical transmembrane passes span 43–63, 93–113, 124–144, 202–222, 226–246, and 254–274; these read VMYLFDWMMVVILLIVGGILF, VLIPVIIALPLAIIIVVSLIV, ILGLAQSLALTLLLTGSFKCF, SITAASFGFLALFIHAKFKIF, GHIFLYVIVSGCIIGAGLIGI, and HTFLNVLAGWSIGLIIALSCY.

It belongs to the PA-phosphatase related phosphoesterase family.

Its subcellular location is the membrane. The sequence is that of PA-phosphatase related-family protein DDB_G0275547 from Dictyostelium discoideum (Social amoeba).